Reading from the N-terminus, the 353-residue chain is Stachydrine N-demethylase reductase subunit Stc4 (353 aa).

Residues 11–114 (SDAEPLECVT…IGPAGKFSIV (104 aa)) enclose the FAD-binding FR-type domain. The 2Fe-2S ferredoxin-type domain maps to 269 to 353 (AEIAFALSGV…KPLRRVSVEA (85 aa)). [2Fe-2S] cluster is bound by residues cysteine 303, cysteine 308, cysteine 311, and cysteine 341.

This sequence in the N-terminal section; belongs to the FAD-binding oxidoreductase type 6 family. In terms of assembly, the system is probably composed of an oxygenase subunit (Stc2) and two reductase subunits (Stc3 and Stc4). The cofactor is FAD. [2Fe-2S] cluster serves as cofactor.

In terms of biological role, reductase involved in the catabolism of stachydrine (L-proline betaine), a source of carbon and nitrogen. Part of a Rieske-type oxygenase system that catalyzes the demethylation of stachydrine to produce N-methyl-L-proline (monomethylproline). This subunit is probably involved in the transfer of electrons from NAD(P)H to the catalytic subunit Stc2. The protein is Stachydrine N-demethylase reductase subunit Stc4 of Rhizobium meliloti (strain 1021) (Ensifer meliloti).